A 221-amino-acid polypeptide reads, in one-letter code: MIIAIDGPSASGKSSIARELGVRLNYKFISSGHLYRIITLIAQRSLMNSCDFISEDSLLNLILENDISFNNFAFLLNGENVENQILNDKIDFQVSFYSSYVGIRNIVNKKLREVVKFSDDNYIIEGRDITTVVFPESEFKIYLDASVKVRALRRYKQRNGNETLEELERTLKRRDDVDKKKQYGKLKLSKGVFYLDTSYKGLDDVCNIIIEKFNLKKVRER.

An ATP-binding site is contributed by Gly-7–Ser-15.

It belongs to the cytidylate kinase family. Type 1 subfamily.

Its subcellular location is the cytoplasm. The catalysed reaction is CMP + ATP = CDP + ADP. The enzyme catalyses dCMP + ATP = dCDP + ADP. This chain is Cytidylate kinase 1, found in Borreliella burgdorferi (strain ATCC 35210 / DSM 4680 / CIP 102532 / B31) (Borrelia burgdorferi).